The following is a 209-amino-acid chain: Uracil phosphoribosyltransferase (209 aa).

5-phospho-alpha-D-ribose 1-diphosphate contacts are provided by residues Arg79, Arg104, and 131-139; that span reads DPMLATGNS. Uracil contacts are provided by residues Ile194 and 199 to 201; that span reads GDA. Asp200 contributes to the 5-phospho-alpha-D-ribose 1-diphosphate binding site.

This sequence belongs to the UPRTase family. Mg(2+) serves as cofactor.

The catalysed reaction is UMP + diphosphate = 5-phospho-alpha-D-ribose 1-diphosphate + uracil. The protein operates within pyrimidine metabolism; UMP biosynthesis via salvage pathway; UMP from uracil: step 1/1. With respect to regulation, allosterically activated by GTP. In terms of biological role, catalyzes the conversion of uracil and 5-phospho-alpha-D-ribose 1-diphosphate (PRPP) to UMP and diphosphate. This chain is Uracil phosphoribosyltransferase, found in Acidovorax ebreus (strain TPSY) (Diaphorobacter sp. (strain TPSY)).